A 45-amino-acid polypeptide reads, in one-letter code: MTKRTLEGTNRKRKRTSGFRARMRSATGRRVIKARRSKGRARLAV.

Basic and acidic residues predominate over residues 1-10; the sequence is MTKRTLEGTN. A disordered region spans residues 1-27; sequence MTKRTLEGTNRKRKRTSGFRARMRSAT. The span at 11–23 shows a compositional bias: basic residues; sequence RKRKRTSGFRARM.

It belongs to the bacterial ribosomal protein bL34 family.

The polypeptide is Large ribosomal subunit protein bL34 (Synechococcus elongatus (strain ATCC 33912 / PCC 7942 / FACHB-805) (Anacystis nidulans R2)).